The following is a 514-amino-acid chain: Na(+)/H(+) antiporter NhaB (514 aa).

The next 12 membrane-spanning stretches (helical) occupy residues 23-43 (LALL…PFIA), 63-83 (PLLP…TSAA), 97-117 (LLLM…LFIF), 120-140 (LLLS…AAAF), 144-164 (FLDA…FYGI), 202-222 (LMMH…VGEP), 238-258 (FFLR…LTCM), 303-323 (AIIG…VGLI), 357-377 (LTVF…APII), 391-411 (LFYL…VGTI), 447-467 (ATPN…APLI), and 475-495 (VWMA…CVEF).

This sequence belongs to the NhaB Na(+)/H(+) (TC 2.A.34) antiporter family.

It is found in the cell inner membrane. The enzyme catalyses 2 Na(+)(in) + 3 H(+)(out) = 2 Na(+)(out) + 3 H(+)(in). Its function is as follows. Na(+)/H(+) antiporter that extrudes sodium in exchange for external protons. This Salmonella paratyphi B (strain ATCC BAA-1250 / SPB7) protein is Na(+)/H(+) antiporter NhaB.